The primary structure comprises 595 residues: uncharacterized protein (595 aa).

Residues 1–21 are disordered; the sequence is MSSQLKSTWAPVPSTKPSQPC. WD repeat units lie at residues 56-95, 100-143, 144-184, 187-226, 229-268, 313-352, 356-393, 433-472, 477-516, 520-559, and 564-594; these read EHTA…KILK, AISG…GEIF, GHSS…FNRS, VHSK…QVYE, AHKG…LIRE, GHQR…AFPL, SHTN…FAKD, KTIY…LCEV, DSTA…VITS, FHTG…KYIA, and HSLG…WSVT.

Belongs to the WD repeat AIP1 family.

This is an uncharacterized protein from Schizosaccharomyces pombe (strain 972 / ATCC 24843) (Fission yeast).